A 751-amino-acid chain; its full sequence is Amyloid-beta precursor protein (751 aa).

An N-terminal signal peptide occupies residues 1–17; sequence MLPGLALLLLAAWTARA. Topologically, residues 18-682 are extracellular; the sequence is LEVPTDGNAG…AEDVGSNKGA (665 aa). Residues 28-123 are GFLD subdomain; sequence LLAEPQIAMF…PYRCLVGEFV (96 aa). The E1 domain occupies 28-189; sequence LLAEPQIAMF…RGVEFVCCPL (162 aa). Cystine bridges form between C38–C62, C73–C117, C98–C105, C133–C187, C144–C174, and C158–C186. 96–110 serves as a coordination point for heparin; that stretch reads NWCKRDRKQCKTHPH. Residues 131–189 form a cuBD subdomain region; that stretch reads DKCKFLHQERMDVCETHLHWHTVAKETCSEKSTNLHDYGMLLPCGIDKFRGVEFVCCPL. The Cu(2+) site is built by H147, H151, and Y168. The tract at residues 181–188 is zinc-binding; it reads GVEFVCCP. Residues E183, C186, and C187 each coordinate Zn(2+). A disordered region spans residues 195–284; sequence HVDSADAEED…TTTTTTESVE (90 aa). Phosphoserine; by CK1 and CK2 is present on residues S198 and S206. 2 positions are modified to sulfotyrosine: Y217 and Y262. Residues 228–264 are compositionally biased toward acidic residues; it reads VAEEEEVAEVEEEEADDDEDDEDGDEVEEEAEEPYEE. Low complexity predominate over residues 268–281; sequence RTTSIATTTTTTTE. Cystine bridges form between C291–C341, C300–C324, and C316–C337. In terms of domain architecture, BPTI/Kunitz inhibitor spans 291 to 341; that stretch reads CSEQAETGPCRAMISRWYFDVTEGKCAPFFYGGCGGNRNNFDTEEYCMAVC. 2 heparin-binding regions span residues 316–344 and 363–428; these read CAPFFYGGCGGNRNNFDTEEYCMAVCGSV and PGDE…QEAA. Y336 is subject to Sulfotyrosine. Positions 344-346 match the OX-2 motif; it reads VIP. In terms of domain architecture, E2 spans 355 to 546; sequence AVDKYLETPG…EEIQDEVDEL (192 aa). S422 is subject to Phosphoserine. Position 478 is a phosphotyrosine (Y478). Residues 504–521 are collagen-binding; the sequence is AAQIRSQVMTHLRVIYER. N523 and N552 each carry an N-linked (GlcNAc...) asparagine glycan. Cu(2+) contacts are provided by H658, Y662, H665, and H666. H658, Y662, H665, and H666 together coordinate Zn(2+). The interval 676–703 is interaction with PSEN1; it reads VGSNKGAIIGLMVGGVVIATVIVITLVM. Residues 683–703 traverse the membrane as a helical segment; sequence IIGLMVGGVVIATVIVITLVM. Residues 704–751 are Cytoplasmic-facing; the sequence is LKKKQYTSIHHGVVEVDAAVTPEERHLSKMQQNGYENPTYKFFEQMQN. The Basolateral sorting signal signature appears at 705 to 715; the sequence is KKKQYTSIHHG. The residue at position 710 (T710) is a Phosphothreonine. S711 is modified (phosphoserine; by APP-kinase I). The segment at 713-732 is interaction with G(o)-alpha; the sequence is HHGVVEVDAAVTPEERHLSK. T724 bears the Phosphothreonine; by CDK5 and MAPK10 mark. A required for the interaction with KIF5B and for anterograde transport in axons region spans residues 737 to 751; it reads GYENPTYKFFEQMQN. Phosphotyrosine; by ABL1 is present on Y738. Positions 738 to 743 match the YENPXY motif; contains endocytosis signal motif; sequence YENPTY. K744 participates in a covalent cross-link: Glycyl lysine isopeptide (Lys-Gly) (interchain with G-Cter in ubiquitin).

It belongs to the APP family. Binds, via its C-terminus, to the PID domain of several cytoplasmic proteins, including APBB family members, the APBA family, MAPK8IP1, SHC1 and NUMB and DAB1. Binding to DAB1 inhibits its serine phosphorylation. Interacts (via NPXY motif) with DAB2 (via PID domain); the interaction is impaired by tyrosine phosphorylation of the NPXY motif. Also interacts with GPCR-like protein BPP, APPBP1, IB1, KNS2 (via its TPR domains), APPBP2 (via BaSS) and DDB1. In vitro, it binds MAPT via the MT-binding domains. Associates with microtubules in the presence of ATP and in a kinesin-dependent manner. Interacts, through a C-terminal domain, with GNAO1. Amyloid-beta protein 42 binds CHRNA7 in hippocampal neurons. Amyloid-beta associates with HADH2. Interacts with CPEB1, ANKS1B and AGER. Interacts with ITM2B. Interacts with ITM2C. Interacts with IDE. Can form homodimers; dimerization is enhanced in the presence of Cu(2+) ions. Can form homodimers; this is promoted by heparin binding. Amyloid-beta protein 40 interacts with S100A9. CTF-alpha product of APP interacts with GSAP. Isoform APP695 interacts with SORL1 (via N-terminal ectodomain); this interaction retains APP in the trans-Golgi network and reduces processing into soluble APP-alpha and amyloid-beta peptides. Isoform APP770 interacts with SORL1. The C99 fragment also interacts with SORL1. Interacts with PLD3. Interacts with VDAC1. Interacts with NSG1; could regulate APP processing. Amyloid-beta protein 42 interacts with FPR2. Interacts (via transmembrane region) with PSEN1; the interaction is direct. Interacts with LRRK2. Interacts (via cytoplasmic domain) with KIF5B. Interacts (via C-terminus) with APBB2/FE65L1 (via C-terminus). Interacts (via intracellular domain) with APBB3. Post-translationally, proteolytically processed under normal cellular conditions. Cleavage either by alpha-secretase, beta-secretase or theta-secretase leads to generation and extracellular release of soluble APP peptides, S-APP-alpha and S-APP-beta, and the retention of corresponding membrane-anchored C-terminal fragments, C80, C83 and C99. Subsequent processing of C80 and C83 by gamma-secretase yields P3 peptides. This is the major secretory pathway and is non-amyloidogenic. Alternatively, presenilin/nicastrin-mediated gamma-secretase processing of C99 releases the amyloid-beta proteins, amyloid-beta protein 40 and amyloid-beta protein 42, major components of amyloid plaques, and the cytotoxic C-terminal fragments, gamma-CTF(50), gamma-CTF(57) and gamma-CTF(59). PSEN1 cleavage is more efficient with C83 than with C99 as substrate (in vitro). Amyloid-beta protein 40 and Amyloid-beta protein 42 are cleaved by ACE. Many other minor amyloid-beta peptides, amyloid-beta 1-X peptides, are found in cerebral spinal fluid (CSF) including the amyloid-beta X-15 peptides, produced from the cleavage by alpha-secretase. In terms of processing, proteolytically cleaved by caspases during neuronal apoptosis. Cleavage at Asp-720 by either caspase-3, -8 or -9 results in the production of the neurotoxic C31 peptide and the increased production of amyloid-beta peptides. N- and O-glycosylated. Post-translationally, phosphorylation in the C-terminal on tyrosine, threonine and serine residues is neuron-specific. Phosphorylation can affect APP processing, neuronal differentiation and interaction with other proteins. Phosphorylated on Thr-724 in neuronal cells by Cdc5 kinase and Mapk10, in dividing cells by Cdc2 kinase in a cell-cycle dependent manner with maximal levels at the G2/M phase and, in vitro, by GSK-3-beta. The Thr-724 phosphorylated form causes a conformational change which reduces binding of Fe65 family members. In dopaminergic (DA) neurons, phosphorylation on Thr-724 by LRKK2 promotes the production and the nuclear translocation of the APP intracellular domain (AICD) which induces DA neuron apoptosis. Phosphorylation on Tyr-738 is required for SHC binding. Phosphorylated in the extracellular domain by casein kinases on both soluble and membrane-bound APP. This phosphorylation is inhibited by heparin. In terms of processing, trophic-factor deprivation triggers the cleavage of surface APP by beta-secretase to release sAPP-beta which is further cleaved to release an N-terminal fragment of APP (N-APP). Amyloid-beta peptides are degraded by IDE. Post-translationally, sulfated on tyrosine residues.

It is found in the cell membrane. The protein localises to the membrane. It localises to the perikaryon. The protein resides in the cell projection. Its subcellular location is the growth cone. It is found in the clathrin-coated pit. The protein localises to the early endosome. It localises to the cytoplasmic vesicle. The protein resides in the endoplasmic reticulum. Its subcellular location is the golgi apparatus. It is found in the secreted. The protein localises to the cell surface. It localises to the nucleus. The protein resides in the cytoplasm. Its function is as follows. Functions as a cell surface receptor and performs physiological functions on the surface of neurons relevant to neurite growth, neuronal adhesion and axonogenesis. Interaction between APP molecules on neighboring cells promotes synaptogenesis. Involved in cell mobility and transcription regulation through protein-protein interactions. Can promote transcription activation through binding to APBB1-KAT5 and inhibit Notch signaling through interaction with Numb. Couples to apoptosis-inducing pathways such as those mediated by G(o) and JIP. Inhibits G(o)-alpha ATPase activity. Acts as a kinesin I membrane receptor, mediating the axonal transport of beta-secretase and presenilin 1. By acting as a kinesin I membrane receptor, plays a role in axonal anterograde transport of cargo towards synapses in axons. May be involved in copper homeostasis/oxidative stress through copper ion reduction. In vitro, copper-metallated APP induces neuronal death directly or is potentiated through Cu(2+)-mediated low-density lipoprotein oxidation. Can regulate neurite outgrowth through binding to components of the extracellular matrix such as heparin and collagen I and IV. Induces a AGER-dependent pathway that involves activation of p38 MAPK, resulting in internalization of amyloid-beta peptide and mitochondrial dysfunction in cultured cortical neurons. Provides Cu(2+) ions for GPC1 which are required for release of nitric oxide (NO) and subsequent degradation of the heparan sulfate chains on GPC1. Functionally, amyloid-beta peptides are lipophilic metal chelators with metal-reducing activity. Binds transient metals such as copper, zinc and iron. The gamma-CTF peptides as well as the caspase-cleaved peptides, including C31, are potent enhancers of neuronal apoptosis. The sequence is that of Amyloid-beta precursor protein from Saimiri sciureus (Common squirrel monkey).